The primary structure comprises 364 residues: MANVVLRNVRKTYPGGFEAIKGVDLEVGDGQFCVLVGPSGCGKSTLLRMVAGLETITAGEIDIGGRVVNDVEPADRDIAMVFQNYALYPHMSVYNNMAYGLRNRGMAKPEIEARVQEAARILEIGAMLDRKPRQLSGGQRQRVAMGRAIVRQPKVFLFDEPLSNLDAKLRVAMRVEIRKLQRRLSTTAIYVTHDQLEAMTLADILVVMNAGQVEQIGSPLDVYAKPATTFVASFIGAPPMNLIPLDAEGVRARFGGAVTEAGVLGVRPEDLAISSEPPAPGGLTLDLAVEAIERVGPETFVYGTRSPGGDLAAISSKPGELPPDEIIIRIPGQEAPAIGQRISVVALRHNLHLFSADGRRRIAV.

The region spanning 4-235 (VVLRNVRKTY…PATTFVASFI (232 aa)) is the ABC transporter domain. ATP is bound at residue 37–44 (GPSGCGKS).

This sequence belongs to the ABC transporter superfamily. sn-glycerol-3-phosphate importer (TC 3.A.1.1.3) family. The complex is composed of two ATP-binding proteins (UgpC), two transmembrane proteins (UgpA and UgpE) and a solute-binding protein (UgpB).

The protein resides in the cell inner membrane. The enzyme catalyses sn-glycerol 3-phosphate(out) + ATP + H2O = sn-glycerol 3-phosphate(in) + ADP + phosphate + H(+). Part of the ABC transporter complex UgpBAEC involved in sn-glycerol-3-phosphate (G3P) import. Responsible for energy coupling to the transport system. In Rhodopseudomonas palustris (strain BisB5), this protein is sn-glycerol-3-phosphate import ATP-binding protein UgpC.